The following is a 616-amino-acid chain: Dihydroxy-acid dehydratase (616 aa).

Aspartate 81 is a Mg(2+) binding site. Cysteine 122 provides a ligand contact to [2Fe-2S] cluster. Residues aspartate 123 and lysine 124 each coordinate Mg(2+). An N6-carboxylysine modification is found at lysine 124. Cysteine 195 contributes to the [2Fe-2S] cluster binding site. Glutamate 491 lines the Mg(2+) pocket. The active-site Proton acceptor is serine 517.

It belongs to the IlvD/Edd family. Homodimer. [2Fe-2S] cluster serves as cofactor. It depends on Mg(2+) as a cofactor.

The catalysed reaction is (2R)-2,3-dihydroxy-3-methylbutanoate = 3-methyl-2-oxobutanoate + H2O. It carries out the reaction (2R,3R)-2,3-dihydroxy-3-methylpentanoate = (S)-3-methyl-2-oxopentanoate + H2O. It functions in the pathway amino-acid biosynthesis; L-isoleucine biosynthesis; L-isoleucine from 2-oxobutanoate: step 3/4. It participates in amino-acid biosynthesis; L-valine biosynthesis; L-valine from pyruvate: step 3/4. Functions in the biosynthesis of branched-chain amino acids. Catalyzes the dehydration of (2R,3R)-2,3-dihydroxy-3-methylpentanoate (2,3-dihydroxy-3-methylvalerate) into 2-oxo-3-methylpentanoate (2-oxo-3-methylvalerate) and of (2R)-2,3-dihydroxy-3-methylbutanoate (2,3-dihydroxyisovalerate) into 2-oxo-3-methylbutanoate (2-oxoisovalerate), the penultimate precursor to L-isoleucine and L-valine, respectively. This chain is Dihydroxy-acid dehydratase, found in Salmonella schwarzengrund (strain CVM19633).